Reading from the N-terminus, the 112-residue chain is MKKVLFLLLACAAVAFAAEINAPVEQEAINVWIKAFSVLAAGLGLGVAALGGAIGMGNTAAATIAGTARNPGLGPKLMTTMFIALAMIEAQVIYALVIALIALYANPFIVLQ.

The next 2 membrane-spanning stretches (helical) occupy residues 36–56 (FSVL…AIGM) and 81–101 (MFIA…IALI).

Belongs to the ATPase C chain family. F-type ATPases have 2 components, F(1) - the catalytic core - and F(0) - the membrane proton channel. F(1) has five subunits: alpha(3), beta(3), gamma(1), delta(1), epsilon(1). F(0) has three main subunits: a(1), b(2) and c(10-14). The alpha and beta chains form an alternating ring which encloses part of the gamma chain. F(1) is attached to F(0) by a central stalk formed by the gamma and epsilon chains, while a peripheral stalk is formed by the delta and b chains.

The protein resides in the cell inner membrane. F(1)F(0) ATP synthase produces ATP from ADP in the presence of a proton or sodium gradient. F-type ATPases consist of two structural domains, F(1) containing the extramembraneous catalytic core and F(0) containing the membrane proton channel, linked together by a central stalk and a peripheral stalk. During catalysis, ATP synthesis in the catalytic domain of F(1) is coupled via a rotary mechanism of the central stalk subunits to proton translocation. In terms of biological role, key component of the F(0) channel; it plays a direct role in translocation across the membrane. A homomeric c-ring of between 10-14 subunits forms the central stalk rotor element with the F(1) delta and epsilon subunits. This Campylobacter jejuni (strain RM1221) protein is ATP synthase subunit c.